Here is a 272-residue protein sequence, read N- to C-terminus: Shikimate dehydrogenase (NADP(+)) (272 aa).

Shikimate is bound by residues 14 to 16 (SKS) and Thr-61. Lys-65 functions as the Proton acceptor in the catalytic mechanism. An NADP(+)-binding site is contributed by Glu-77. Shikimate contacts are provided by Asn-86 and Asp-102. NADP(+) is bound by residues 126–130 (GAGGA), 149–154 (NRTVSR), and Met-213. Tyr-215 is a binding site for shikimate. Gly-237 is an NADP(+) binding site.

This sequence belongs to the shikimate dehydrogenase family. Homodimer.

It catalyses the reaction shikimate + NADP(+) = 3-dehydroshikimate + NADPH + H(+). The protein operates within metabolic intermediate biosynthesis; chorismate biosynthesis; chorismate from D-erythrose 4-phosphate and phosphoenolpyruvate: step 4/7. Involved in the biosynthesis of the chorismate, which leads to the biosynthesis of aromatic amino acids. Catalyzes the reversible NADPH linked reduction of 3-dehydroshikimate (DHSA) to yield shikimate (SA). The protein is Shikimate dehydrogenase (NADP(+)) of Shigella dysenteriae serotype 1 (strain Sd197).